The sequence spans 678 residues: Endoplasmic reticulum membrane-associated RNA degradation protein (678 aa).

A run of 2 helical transmembrane segments spans residues 390–410 and 587–607; these read LLAF…LSVF and VLSL…AVCG.

The protein localises to the endoplasmic reticulum membrane. Functionally, may play a role in neuronal migration during embryonic development. In Homo sapiens (Human), this protein is Endoplasmic reticulum membrane-associated RNA degradation protein (ERMARD).